The following is a 156-amino-acid chain: Small ribosomal subunit protein uS7 (156 aa).

This sequence belongs to the universal ribosomal protein uS7 family. In terms of assembly, part of the 30S ribosomal subunit. Contacts proteins S9 and S11.

Functionally, one of the primary rRNA binding proteins, it binds directly to 16S rRNA where it nucleates assembly of the head domain of the 30S subunit. Is located at the subunit interface close to the decoding center, probably blocks exit of the E-site tRNA. The polypeptide is Small ribosomal subunit protein uS7 (Mycolicibacterium gilvum (strain PYR-GCK) (Mycobacterium gilvum (strain PYR-GCK))).